The chain runs to 552 residues: Non-structural protein NS1 (552 aa).

Belongs to the orbivirus non-structural protein NS1 family.

The chain is Non-structural protein NS1 (Segment-5) from Antilocapra americana (Pronghorn).